A 196-amino-acid chain; its full sequence is Small ribosomal subunit protein uS4c (196 aa).

The interval 15–41 is disordered; the sequence is LGALPGLTSKRPRSGSDLKNPLRSGKR. Positions 89 to 150 constitute an S4 RNA-binding domain; that stretch reads MRLDNILFRL…KQRSKALIQN (62 aa).

This sequence belongs to the universal ribosomal protein uS4 family. As to quaternary structure, part of the 30S ribosomal subunit. Contacts protein S5. The interaction surface between S4 and S5 is involved in control of translational fidelity.

It localises to the plastid. The protein resides in the chloroplast. Functionally, one of the primary rRNA binding proteins, it binds directly to 16S rRNA where it nucleates assembly of the body of the 30S subunit. With S5 and S12 plays an important role in translational accuracy. This chain is Small ribosomal subunit protein uS4c (rps4), found in Narcissus odorus (Campernelle jonquil).